The primary structure comprises 365 residues: Quinone oxidoreductase-like protein 2 homolog (365 aa).

It belongs to the zinc-containing alcohol dehydrogenase family. Quinone oxidoreductase subfamily.

The sequence is that of Quinone oxidoreductase-like protein 2 homolog from Nematostella vectensis (Starlet sea anemone).